The chain runs to 577 residues: Arginine--tRNA ligase (577 aa).

The short motif at 122 to 132 (PNVAKEMHVGH) is the 'HIGH' region element.

Belongs to the class-I aminoacyl-tRNA synthetase family. In terms of assembly, monomer.

Its subcellular location is the cytoplasm. The enzyme catalyses tRNA(Arg) + L-arginine + ATP = L-arginyl-tRNA(Arg) + AMP + diphosphate. The protein is Arginine--tRNA ligase of Haemophilus influenzae (strain 86-028NP).